We begin with the raw amino-acid sequence, 492 residues long: Glutamate--tRNA ligase (492 aa).

The short motif at 13–23 is the 'HIGH' region element; sequence PSPTGTPHVGM. The 'KMSKS' region signature appears at 257-261; that stretch reads KLSKR. Residue Lys-260 coordinates ATP.

Belongs to the class-I aminoacyl-tRNA synthetase family. Glutamate--tRNA ligase type 1 subfamily. In terms of assembly, monomer.

It is found in the cytoplasm. The catalysed reaction is tRNA(Glu) + L-glutamate + ATP = L-glutamyl-tRNA(Glu) + AMP + diphosphate. Functionally, catalyzes the attachment of glutamate to tRNA(Glu) in a two-step reaction: glutamate is first activated by ATP to form Glu-AMP and then transferred to the acceptor end of tRNA(Glu). This is Glutamate--tRNA ligase from Mycolicibacterium paratuberculosis (strain ATCC BAA-968 / K-10) (Mycobacterium paratuberculosis).